Here is a 321-residue protein sequence, read N- to C-terminus: Arginine-hydroxylase NDUFAF5, mitochondrial (321 aa).

The transit peptide at 1 to 25 (MNVSVKSLRGVSRTWRSFSSRQGMN) directs the protein to the mitochondrion.

It belongs to the methyltransferase superfamily. In terms of assembly, interacts with NDUFS7.

The protein resides in the mitochondrion inner membrane. Functionally, arginine hydroxylase that mediates hydroxylation of 'Arg-111' of NDUFS7 and is involved in the assembly of mitochondrial NADH:ubiquinone oxidoreductase complex (complex I, MT-ND1) at early stages. May also have methyltransferase activity. The sequence is that of Arginine-hydroxylase NDUFAF5, mitochondrial from Danio rerio (Zebrafish).